Reading from the N-terminus, the 341-residue chain is Probable sulfurtransferase (341 aa).

Zn(2+)-binding residues include Cys-40, Cys-42, Cys-58, and Cys-61. Gly-88 contacts ATP. The [4Fe-4S] cluster site is built by Cys-176 and Cys-179. Positions 183 and 202 each coordinate ATP. Cys-267 is a binding site for [4Fe-4S] cluster. Zn(2+) is bound by residues Cys-316, Cys-319, Cys-328, and Cys-331.

This sequence belongs to the TtcA family. Requires [4Fe-4S] cluster as cofactor. It depends on Mg(2+) as a cofactor.

The sequence is that of Probable sulfurtransferase from Methanocaldococcus jannaschii (strain ATCC 43067 / DSM 2661 / JAL-1 / JCM 10045 / NBRC 100440) (Methanococcus jannaschii).